The chain runs to 909 residues: Protein translocase subunit SecA (909 aa).

ATP is bound by residues Q87, 105–109, and D507; that span reads GEGKT. Disordered stretches follow at residues 567-586 and 859-909; these read RRID…PGSS and YSEA…GKLD. Residues 865–889 are compositionally biased toward basic and acidic residues; sequence EHQSVTEGHEAKQQPFVRKSDKIGR. Zn(2+)-binding residues include C893, C895, C904, and H905. A compositionally biased stretch (basic residues) spans 899–909; sequence RKYKQCHGKLD.

Belongs to the SecA family. In terms of assembly, monomer and homodimer. Part of the essential Sec protein translocation apparatus which comprises SecA, SecYEG and auxiliary proteins SecDF-YajC and YidC. The cofactor is Zn(2+).

It is found in the cell inner membrane. The protein localises to the cytoplasm. It carries out the reaction ATP + H2O + cellular proteinSide 1 = ADP + phosphate + cellular proteinSide 2.. Part of the Sec protein translocase complex. Interacts with the SecYEG preprotein conducting channel. Has a central role in coupling the hydrolysis of ATP to the transfer of proteins into and across the cell membrane, serving both as a receptor for the preprotein-SecB complex and as an ATP-driven molecular motor driving the stepwise translocation of polypeptide chains across the membrane. This is Protein translocase subunit SecA from Nitrosomonas eutropha (strain DSM 101675 / C91 / Nm57).